The following is a 51-amino-acid chain: MGGRFSGRVGIEKGGHPPSAADHSAGHLGPVCRFFRHPVITTRFNIKVMKG.

The interval 1-24 is disordered; it reads MGGRFSGRVGIEKGGHPPSAADHS.

This is an uncharacterized protein from Escherichia coli.